The chain runs to 100 residues: MIEMFTQIFIISALVIFGMALLVCLVRLIKGPTTADRVVSFDASSAVVMSIVGVMSVIFNSVSYLDSIMLIAIISFVSSVSISRFIGEGRVFNGNHKRHR.

Helical transmembrane passes span 5 to 25 (FTQIFIISALVIFGMALLVCL), 38 to 60 (VVSFDASSAVVMSIVGVMSVIFN), and 65 to 87 (LDSIMLIAIISFVSSVSISRFIG).

It belongs to the CPA3 antiporters (TC 2.A.63) subunit F family. In terms of assembly, may form a heterooligomeric complex that consists of seven subunits: mnhA2, mnhB2, mnhC2, mnhD2, mnhE2, mnhF2 and mnhG2.

It localises to the cell membrane. The chain is Putative antiporter subunit mnhF2 (mnhF2) from Staphylococcus epidermidis (strain ATCC 35984 / DSM 28319 / BCRC 17069 / CCUG 31568 / BM 3577 / RP62A).